The chain runs to 276 residues: NH(3)-dependent NAD(+) synthetase (276 aa).

51–58 provides a ligand contact to ATP; it reads GISGGVDS. Residue D57 coordinates Mg(2+). R148 is a deamido-NAD(+) binding site. T168 provides a ligand contact to ATP. E173 contributes to the Mg(2+) binding site. Deamido-NAD(+) contacts are provided by K181 and D188. Residues K197 and T219 each coordinate ATP. 268-269 provides a ligand contact to deamido-NAD(+); the sequence is HK.

The protein belongs to the NAD synthetase family. Homodimer.

The enzyme catalyses deamido-NAD(+) + NH4(+) + ATP = AMP + diphosphate + NAD(+) + H(+). It functions in the pathway cofactor biosynthesis; NAD(+) biosynthesis; NAD(+) from deamido-NAD(+) (ammonia route): step 1/1. In terms of biological role, catalyzes the ATP-dependent amidation of deamido-NAD to form NAD. Uses ammonia as a nitrogen source. In Streptomyces coelicolor (strain ATCC BAA-471 / A3(2) / M145), this protein is NH(3)-dependent NAD(+) synthetase.